We begin with the raw amino-acid sequence, 238 residues long: Survival of motor neuron-related-splicing factor 30 (238 aa).

The Tudor domain maps to 72–132 (SWKVGDKCMA…KPVEEGRKAK (61 aa)). A Nuclear localization signal motif is present at residues 142–160 (KKEMIAQQREYKKKKALKK). Position 201 is a phosphoserine (serine 201). Lysine 219 carries the post-translational modification N6-acetyllysine.

The protein belongs to the SMN family. In terms of assembly, associates with spliceosomes. Associates with U4/U5/U6 tri-snRNP and with U2 snRNP.

The protein localises to the nucleus speckle. It is found in the nucleus. It localises to the cajal body. Its function is as follows. Involved in spliceosome assembly. This chain is Survival of motor neuron-related-splicing factor 30 (SMNDC1), found in Pongo abelii (Sumatran orangutan).